The following is a 447-amino-acid chain: tRNA(Ile)-lysidine synthase (447 aa).

31-36 (SGGMDS) contributes to the ATP binding site.

Belongs to the tRNA(Ile)-lysidine synthase family.

It is found in the cytoplasm. The enzyme catalyses cytidine(34) in tRNA(Ile2) + L-lysine + ATP = lysidine(34) in tRNA(Ile2) + AMP + diphosphate + H(+). In terms of biological role, ligates lysine onto the cytidine present at position 34 of the AUA codon-specific tRNA(Ile) that contains the anticodon CAU, in an ATP-dependent manner. Cytidine is converted to lysidine, thus changing the amino acid specificity of the tRNA from methionine to isoleucine. This chain is tRNA(Ile)-lysidine synthase, found in Pseudothermotoga lettingae (strain ATCC BAA-301 / DSM 14385 / NBRC 107922 / TMO) (Thermotoga lettingae).